Reading from the N-terminus, the 104-residue chain is Large ribosomal subunit protein uL24 (104 aa).

It belongs to the universal ribosomal protein uL24 family. Part of the 50S ribosomal subunit.

Functionally, one of two assembly initiator proteins, it binds directly to the 5'-end of the 23S rRNA, where it nucleates assembly of the 50S subunit. One of the proteins that surrounds the polypeptide exit tunnel on the outside of the subunit. In Chromobacterium violaceum (strain ATCC 12472 / DSM 30191 / JCM 1249 / CCUG 213 / NBRC 12614 / NCIMB 9131 / NCTC 9757 / MK), this protein is Large ribosomal subunit protein uL24.